Reading from the N-terminus, the 337-residue chain is Transaldolase (337 aa).

Residues 1–10 carry the Nuclear localization signal motif; that stretch reads MSGSPVKRQR. Position 115 is an N6-acetyllysine (lysine 115). Catalysis depends on lysine 142, which acts as the Schiff-base intermediate with substrate. An N6-acetyllysine modification is found at lysine 219. Residues serine 237 and serine 256 each carry the phosphoserine modification. An N6-acetyllysine mark is found at lysine 269, lysine 286, and lysine 321.

This sequence belongs to the transaldolase family. Type 1 subfamily. Homodimer. Interacts with KPNA1 and KPNA4.

Its subcellular location is the nucleus. It is found in the cytoplasm. It catalyses the reaction D-sedoheptulose 7-phosphate + D-glyceraldehyde 3-phosphate = D-erythrose 4-phosphate + beta-D-fructose 6-phosphate. Its pathway is carbohydrate degradation; pentose phosphate pathway; D-glyceraldehyde 3-phosphate and beta-D-fructose 6-phosphate from D-ribose 5-phosphate and D-xylulose 5-phosphate (non-oxidative stage): step 2/3. In terms of biological role, catalyzes the rate-limiting step of the non-oxidative phase in the pentose phosphate pathway. Catalyzes the reversible conversion of sedheptulose-7-phosphate and D-glyceraldehyde 3-phosphate into erythrose-4-phosphate and beta-D-fructose 6-phosphate. The polypeptide is Transaldolase (TALDO1) (Cricetulus griseus (Chinese hamster)).